A 491-amino-acid polypeptide reads, in one-letter code: 2,3-bisphosphoglycerate-independent phosphoglycerate mutase (491 aa).

Asp11 and Ser61 together coordinate Mn(2+). The active-site Phosphoserine intermediate is the Ser61. Substrate is bound by residues His118, 147–148 (RD), Arg177, Arg183, 248–251 (RSDR), and Lys320. Asp386, His390, Asp427, His428, and His445 together coordinate Mn(2+).

This sequence belongs to the BPG-independent phosphoglycerate mutase family. In terms of assembly, monomer. Requires Mn(2+) as cofactor.

The catalysed reaction is (2R)-2-phosphoglycerate = (2R)-3-phosphoglycerate. The protein operates within carbohydrate degradation; glycolysis; pyruvate from D-glyceraldehyde 3-phosphate: step 3/5. Its function is as follows. Catalyzes the interconversion of 2-phosphoglycerate and 3-phosphoglycerate. This chain is 2,3-bisphosphoglycerate-independent phosphoglycerate mutase, found in Aliarcobacter butzleri (strain RM4018) (Arcobacter butzleri).